A 559-amino-acid chain; its full sequence is Urocanate hydratase (559 aa).

Residues 54 to 55 (GG), Q132, 178 to 180 (GMG), E198, R203, 244 to 245 (NA), 265 to 269 (QTSAH), 275 to 276 (YL), and Y324 each bind NAD(+). C412 is an active-site residue. Residue G494 participates in NAD(+) binding.

The protein belongs to the urocanase family. NAD(+) serves as cofactor.

The protein localises to the cytoplasm. It carries out the reaction 4-imidazolone-5-propanoate = trans-urocanate + H2O. The protein operates within amino-acid degradation; L-histidine degradation into L-glutamate; N-formimidoyl-L-glutamate from L-histidine: step 2/3. Catalyzes the conversion of urocanate to 4-imidazolone-5-propionate. This chain is Urocanate hydratase, found in Azotobacter vinelandii (strain DJ / ATCC BAA-1303).